A 392-amino-acid polypeptide reads, in one-letter code: Putative 8-amino-7-oxononanoate synthase (392 aa).

Arg22 lines the substrate pocket. 109-110 is a binding site for pyridoxal 5'-phosphate; it reads GW. His139 serves as a coordination point for substrate. Pyridoxal 5'-phosphate is bound by residues Ser187, 212–215, and 239–242; these read DEAH and TFSK. The residue at position 242 (Lys242) is an N6-(pyridoxal phosphate)lysine. Thr356 is a binding site for substrate.

Belongs to the class-II pyridoxal-phosphate-dependent aminotransferase family. BioF subfamily. Homodimer. Requires pyridoxal 5'-phosphate as cofactor.

The catalysed reaction is 6-carboxyhexanoyl-[ACP] + L-alanine + H(+) = (8S)-8-amino-7-oxononanoate + holo-[ACP] + CO2. The protein operates within cofactor biosynthesis; biotin biosynthesis. Functionally, catalyzes the decarboxylative condensation of pimeloyl-[acyl-carrier protein] and L-alanine to produce 8-amino-7-oxononanoate (AON), [acyl-carrier protein], and carbon dioxide. This Paramagnetospirillum magneticum (strain ATCC 700264 / AMB-1) (Magnetospirillum magneticum) protein is Putative 8-amino-7-oxononanoate synthase (bioF).